A 303-amino-acid polypeptide reads, in one-letter code: uncharacterized protein (303 aa).

NADP(+) contacts are provided by residues 7-12 and Asn-101; that span reads GAGGVG. Lys-184 acts as the Proton donor in catalysis. Glu-267 contributes to the NADP(+) binding site.

It belongs to the ketopantoate reductase family.

This is an uncharacterized protein from Bacillus subtilis (strain 168).